The following is a 191-amino-acid chain: Protein Ves (191 aa).

The protein belongs to the Ves family.

The sequence is that of Protein Ves from Escherichia coli O8 (strain IAI1).